Here is a 506-residue protein sequence, read N- to C-terminus: Probable alpha-L-arabinofuranosidase B (506 aa).

The N-terminal stretch at 1-26 (MLLPRGFNRAVVTALGVVGTGTLVAA) is a signal peptide. Positions 27–343 (GPCDIYSSGG…ANIVAAKYAV (317 aa)) are catalytic. 3 disulfides stabilise this stretch: C29-C39, C89-C94, and C184-C185. D227 is a binding site for substrate. Catalysis depends on E229, which acts as the Nucleophile. A substrate-binding site is contributed by N230. Residue N285 is glycosylated (N-linked (GlcNAc...) asparagine). G304 is a binding site for substrate. D305 (proton donor) is an active-site residue. The segment at 344–506 (APLTSGPSLT…VSWVVSTSFA (163 aa)) is ABD. N-linked (GlcNAc...) asparagine glycosylation is present at N375. C409 and C447 are oxidised to a cystine. Substrate-binding residues include H424, F427, D443, H471, L476, and D496.

This sequence belongs to the glycosyl hydrolase 54 family.

Its subcellular location is the secreted. The catalysed reaction is Hydrolysis of terminal non-reducing alpha-L-arabinofuranoside residues in alpha-L-arabinosides.. It participates in glycan metabolism; L-arabinan degradation. Alpha-L-arabinofuranosidase involved in the degradation of arabinoxylan, a major component of plant hemicellulose. Able to hydrolyze 1,5-, 1,3- and 1,2-alpha-linkages not only in L-arabinofuranosyl oligosaccharides, but also in polysaccharides containing terminal non-reducing L-arabinofuranoses in side chains, like L-arabinan, arabinogalactan and arabinoxylan. This Aspergillus terreus (strain NIH 2624 / FGSC A1156) protein is Probable alpha-L-arabinofuranosidase B (abfB).